The chain runs to 140 residues: Protein ARABIDOPSIS THALIANA ANTHER 7 (140 aa).

The N-terminal stretch at 1–20 (MKIHAILVVAFLVLMKTAVS) is a signal peptide. 4 cysteine pairs are disulfide-bonded: C29/C87, C39/C54, C55/C111, and C85/C125.

The protein belongs to the plant LTP family. In terms of tissue distribution, tapetum-specific. Also present in pollen.

It is found in the endoplasmic reticulum lumen. The protein is Protein ARABIDOPSIS THALIANA ANTHER 7 of Arabidopsis thaliana (Mouse-ear cress).